The sequence spans 334 residues: MRLLSLLTFSLFAVIGLAPAAQAKDTLTIYTYDSFVSEWGPGPKVKENFEKECDCEVNFVASADGVALLNRLKLEGSKTAADIVLGLDTNLTTEARASGFFAPSGIDQTNVKVPGNFKDDIFVPYDYGYFAVVYDSEKLPNPPKSLKELVEGDPAQKIVLQDPRTATPGLGMLLWMKSVYGDEAGAAWQKLQKRVLTVTPGWSEAYGLFTKGESPMVLSYTTSPAYHMVVEKTDRYKALAYPEGNYLQIELAAQTTTGAKNPLAKKFLAFMTGPGFQDVIPETNWMFPAGKTSKPLPAAFDALPKPEKTLLIPPYEVAKNRRLWVNEWLAATSR.

An N-terminal signal peptide occupies residues 1-23 (MRLLSLLTFSLFAVIGLAPAAQA). Residues 64–65 (DG), 166–167 (AT), Trp-202, and 220–223 (YTTS) contribute to the thiamine site.

Belongs to the bacterial solute-binding protein 1 family. As to quaternary structure, the complex is composed of two ATP-binding proteins (ThiQ), two transmembrane proteins (ThiP) and a solute-binding protein (ThiB).

The protein resides in the periplasm. Functionally, part of the ABC transporter complex ThiBPQ involved in thiamine import. This Brucella suis biovar 1 (strain 1330) protein is Thiamine-binding periplasmic protein (thiB).